Reading from the N-terminus, the 94-residue chain is ESAT-6-like protein EsxL (94 aa).

Belongs to the WXG100 family. ESAT-6 subfamily. Strongly interacts with EsxK to form a heterodimeric complex under reducing conditions.

It is found in the secreted. The sequence is that of ESAT-6-like protein EsxL from Mycobacterium bovis (strain ATCC BAA-935 / AF2122/97).